Here is a 494-residue protein sequence, read N- to C-terminus: Ketol-acid reductoisomerase (NADP(+)) (494 aa).

One can recognise a KARI N-terminal Rossmann domain in the interval 14–208 (LDQLGRCRFM…GGHRAGCLES (195 aa)). Residues 45–48 (CGAQ), Arg-68, Arg-76, Ser-78, and 108–110 (DKQ) contribute to the NADP(+) site. His-132 is an active-site residue. Gly-158 contacts NADP(+). KARI C-terminal knotted domains lie at 209–344 (SFVA…NYPE) and 345–487 (TDVE…MTDM). Mg(2+)-binding residues include Asp-217, Glu-221, Glu-389, and Glu-393. Ser-414 is a substrate binding site.

The protein belongs to the ketol-acid reductoisomerase family. The cofactor is Mg(2+).

The enzyme catalyses (2R)-2,3-dihydroxy-3-methylbutanoate + NADP(+) = (2S)-2-acetolactate + NADPH + H(+). The catalysed reaction is (2R,3R)-2,3-dihydroxy-3-methylpentanoate + NADP(+) = (S)-2-ethyl-2-hydroxy-3-oxobutanoate + NADPH + H(+). It participates in amino-acid biosynthesis; L-isoleucine biosynthesis; L-isoleucine from 2-oxobutanoate: step 2/4. It functions in the pathway amino-acid biosynthesis; L-valine biosynthesis; L-valine from pyruvate: step 2/4. Its function is as follows. Involved in the biosynthesis of branched-chain amino acids (BCAA). Catalyzes an alkyl-migration followed by a ketol-acid reduction of (S)-2-acetolactate (S2AL) to yield (R)-2,3-dihydroxy-isovalerate. In the isomerase reaction, S2AL is rearranged via a Mg-dependent methyl migration to produce 3-hydroxy-3-methyl-2-ketobutyrate (HMKB). In the reductase reaction, this 2-ketoacid undergoes a metal-dependent reduction by NADPH to yield (R)-2,3-dihydroxy-isovalerate. The sequence is that of Ketol-acid reductoisomerase (NADP(+)) from Vibrio parahaemolyticus serotype O3:K6 (strain RIMD 2210633).